Reading from the N-terminus, the 244-residue chain is Nonsense-mediated decay protein 4 (244 aa).

The protein localises to the cytoplasm. Its function is as follows. Involved in nonsense-mediated decay of mRNAs containing premature stop codons. This is Nonsense-mediated decay protein 4 (NMD4) from Kluyveromyces lactis (strain ATCC 8585 / CBS 2359 / DSM 70799 / NBRC 1267 / NRRL Y-1140 / WM37) (Yeast).